Consider the following 151-residue polypeptide: Small ribosomal subunit protein uS15 (151 aa).

This sequence belongs to the universal ribosomal protein uS15 family.

The sequence is that of Small ribosomal subunit protein uS15 (RPS13) from Agaricus bisporus (White button mushroom).